A 256-amino-acid chain; its full sequence is F-actin-capping protein subunit alpha (256 aa).

Serine 31 carries the phosphoserine modification.

The protein belongs to the F-actin-capping protein alpha subunit family. In terms of assembly, component of the F-actin capping complex, composed of a heterodimer of an alpha and a beta subunit.

It localises to the cytoplasm. Its subcellular location is the cytoskeleton. The protein localises to the actin patch. In terms of biological role, F-actin-capping proteins bind in a Ca(2+)-independent manner to the fast growing ends of actin filaments (barbed end) thereby blocking the exchange of subunits at these ends. Unlike other capping proteins (such as gelsolin and severin), these proteins do not sever actin filaments. Competes with formin cdc12 for attachment to the actin filaments barbed ends. Slowly replaces cdc12 on the barbed ends in preparation for filament disassembly during contractile ring constriction. In Schizosaccharomyces pombe (strain 972 / ATCC 24843) (Fission yeast), this protein is F-actin-capping protein subunit alpha (acp1).